Consider the following 1035-residue polypeptide: Unconventional myosin IC (1035 aa).

The Myosin motor domain maps to 21-703 (GVQDFVLLEN…TLFDTEDAYQ (683 aa)). 114 to 121 (GESGSGKT) contacts ATP. S304 carries the post-translational modification Phosphoserine. T310 bears the Phosphothreonine mark. The segment at 578–600 (LNNLMDILMCKEPSYIRCIKPND) is actin-binding. IQ domains follow at residues 696 to 728 (FDTEDAYQEKKHEIAAIIQAHWKGLMQRRKYLK), 729 to 751 (LRAQVIIMQSYCRRKLAQQAAKK), and 752 to 779 (RREAADKIRAFIKGFITRNDAPNGFNEE). Residues 857–1035 (KNNYASSVST…KGHLVIIGTQ (179 aa)) enclose the TH1 domain.

The protein belongs to the TRAFAC class myosin-kinesin ATPase superfamily. Myosin family. Binds F-actin. In the embryo, expressed in gastric caeca, midgut cells of the proventriculus, and in the mid and hindgut. In the larval and adult gut brush border, expressed in the microvilli. Also expressed at high levels in follicle cells during oogenesis.

The protein resides in the cytoplasm. The protein localises to the cell cortex. Its subcellular location is the cell membrane. Its function is as follows. Unconventional myosin that functions as actin-based motor protein with ATPase activity. Binds to membranes enriched in phosphatidylinositol 4-5-bisphosphate, and can glide along actin filaments when anchored to a lipid bilayer. Functions as antagonist for Myo31DF, an unconventional myosin with an essential role in the establishment of body left-right asymmetry. The polypeptide is Unconventional myosin IC (Myo61F) (Drosophila melanogaster (Fruit fly)).